The following is a 557-amino-acid chain: MLRSDAVTKGIQRSPNRAMLRAVGFGDSDFGKPILGIANGYSTITPCNIGLNDLAKRAEEAARQAGGMPQMFGTITVSDGISMGTEGMKYSLVSREVIADAIETACNGQSMDGVLAVGGCDKNMPGAMLAMARMNIPSVFVYGGTIKPGKLGGCDLTVVSAFEAVGQLTSGKIDEVQLTAVEKNACPGAGSCGGMFTANTMSAAIETMGLSLPYSSTMAAEDEEKADSAARSAEVLVEAVKANIRPLDLLTKEAFENAISVIMAVGGSTNAVLHLLAIARTAGVDLSIDDFERIRQRVPVICDLKPSGRYVTVDLHNAGGIPQVMKLLLDAGLLHSDCRTVEGKSLKELLADVPSEPPAGQEVIRPLSNPLYAKGHLAILKGNLASEGSVAKISGVKTPVLTGPARVFESEEDCLAAILDKKIQAGDVVVVRNEGPVGGPGMREMLAPTSAIVGQGLGDKVALITDGRFSGGTYGLVVGHVAPEAAVGGTIGLVQEGDSITVDADQLLLQLNVDQAELDRRRAGWSKPEPRYRSGILGKYARLVSSSSRGATTDHAD.

Cys47 serves as a coordination point for [2Fe-2S] cluster. Asp79 lines the Mg(2+) pocket. Cys120 serves as a coordination point for [2Fe-2S] cluster. Mg(2+) is bound by residues Asp121 and Lys122. Lys122 is subject to N6-carboxylysine. Residue Cys192 participates in [2Fe-2S] cluster binding. Glu444 lines the Mg(2+) pocket. Ser470 (proton acceptor) is an active-site residue.

This sequence belongs to the IlvD/Edd family. As to quaternary structure, homodimer. The cofactor is [2Fe-2S] cluster. Mg(2+) serves as cofactor.

It catalyses the reaction (2R)-2,3-dihydroxy-3-methylbutanoate = 3-methyl-2-oxobutanoate + H2O. The catalysed reaction is (2R,3R)-2,3-dihydroxy-3-methylpentanoate = (S)-3-methyl-2-oxopentanoate + H2O. It functions in the pathway amino-acid biosynthesis; L-isoleucine biosynthesis; L-isoleucine from 2-oxobutanoate: step 3/4. Its pathway is amino-acid biosynthesis; L-valine biosynthesis; L-valine from pyruvate: step 3/4. In terms of biological role, functions in the biosynthesis of branched-chain amino acids. Catalyzes the dehydration of (2R,3R)-2,3-dihydroxy-3-methylpentanoate (2,3-dihydroxy-3-methylvalerate) into 2-oxo-3-methylpentanoate (2-oxo-3-methylvalerate) and of (2R)-2,3-dihydroxy-3-methylbutanoate (2,3-dihydroxyisovalerate) into 2-oxo-3-methylbutanoate (2-oxoisovalerate), the penultimate precursor to L-isoleucine and L-valine, respectively. This chain is Dihydroxy-acid dehydratase, found in Synechococcus sp. (strain CC9605).